The primary structure comprises 396 residues: Ribosomal RNA large subunit methyltransferase I (396 aa).

The PUA domain occupies 2-81 (TVRLFLAKGR…EEINIEFFIR (80 aa)).

Belongs to the methyltransferase superfamily. RlmI family.

The protein resides in the cytoplasm. The enzyme catalyses cytidine(1962) in 23S rRNA + S-adenosyl-L-methionine = 5-methylcytidine(1962) in 23S rRNA + S-adenosyl-L-homocysteine + H(+). Functionally, specifically methylates the cytosine at position 1962 (m5C1962) of 23S rRNA. The polypeptide is Ribosomal RNA large subunit methyltransferase I (Serratia proteamaculans (strain 568)).